A 103-amino-acid polypeptide reads, in one-letter code: Matrix Gla protein (103 aa).

An N-terminal signal peptide occupies residues 1 to 19 (MKSLLLLSVLAALAVAALC). Glu-21 carries the post-translational modification 4-carboxyglutamate. Phosphoserine is present on residues Ser-22, Ser-25, and Ser-28. The region spanning 51 to 97 (RAKAQERIRELNKPPYELNREACDDYKLCERYAMVYGYNAAYNRYFR) is the Gla domain. A 4-carboxyglutamate mark is found at Glu-56, Glu-60, Glu-67, and Glu-71. Cys-73 and Cys-79 are oxidised to a cystine.

Belongs to the osteocalcin/matrix Gla protein family. In terms of processing, requires vitamin K-dependent gamma-carboxylation for its function.

It is found in the secreted. Its function is as follows. Associates with the organic matrix of bone and cartilage. Thought to act as an inhibitor of bone formation. This Sus scrofa (Pig) protein is Matrix Gla protein (MGP).